The sequence spans 118 residues: Beta-2-microglobulin (118 aa).

Positions 1–21 are cleaved as a signal peptide; that stretch reads MGSRWGIAVLGLFCFVSCLEA. Positions 26–113 constitute an Ig-like C1-type domain; that stretch reads PKIQVYSRHP…VHEGVKKTVK (88 aa). C46 and C101 are joined by a disulfide.

It belongs to the beta-2-microglobulin family. As to quaternary structure, heterodimer of an alpha chain and a beta chain. Beta-2-microglobulin is the beta-chain of major histocompatibility complex class I molecules.

Its subcellular location is the secreted. Functionally, component of the class I major histocompatibility complex (MHC). Involved in the presentation of peptide antigens to the immune system. In Ornithorhynchus anatinus (Duckbill platypus), this protein is Beta-2-microglobulin (B2M).